The chain runs to 170 residues: Lipoprotein signal peptidase (170 aa).

3 helical membrane-spanning segments follow: residues 12 to 32, 67 to 87, and 94 to 113; these read WYWI…WVLS, WQRW…SVWL, and MWRL…GNLI. Catalysis depends on residues D123 and D141. The helical transmembrane segment at 133-153 threads the bilayer; that stretch reads HFPAFNIADSAICIGAGLIIL.

This sequence belongs to the peptidase A8 family.

Its subcellular location is the cell inner membrane. The catalysed reaction is Release of signal peptides from bacterial membrane prolipoproteins. Hydrolyzes -Xaa-Yaa-Zaa-|-(S,diacylglyceryl)Cys-, in which Xaa is hydrophobic (preferably Leu), and Yaa (Ala or Ser) and Zaa (Gly or Ala) have small, neutral side chains.. It participates in protein modification; lipoprotein biosynthesis (signal peptide cleavage). Its function is as follows. This protein specifically catalyzes the removal of signal peptides from prolipoproteins. The protein is Lipoprotein signal peptidase of Shewanella piezotolerans (strain WP3 / JCM 13877).